The primary structure comprises 448 residues: C4-dicarboxylate transport protein (448 aa).

7 consecutive transmembrane segments (helical) span residues 22 to 42 (FQVV…PAFA), 55 to 75 (LVKM…IAGM), 90 to 110 (TYFL…AHVV), 137 to 157 (ELSL…SAFV), 159 to 179 (GNIL…ALVG), 199 to 219 (LVHM…AFTI), and 232 to 252 (WLVG…LGIV). Residues 428–448 (RAPPLQAPVPPPDAVAPVSAR) are disordered. Positions 432 to 441 (LQAPVPPPDA) are enriched in pro residues.

Belongs to the dicarboxylate/amino acid:cation symporter (DAACS) (TC 2.A.23) family.

Its subcellular location is the cell inner membrane. Responsible for the transport of dicarboxylates such as succinate, fumarate, and malate from the periplasm across the membrane. This is C4-dicarboxylate transport protein from Xanthomonas campestris pv. campestris (strain 8004).